We begin with the raw amino-acid sequence, 272 residues long: Putative phosphoenolpyruvate synthase regulatory protein (272 aa).

Gly-152–Thr-159 is a binding site for ADP.

The protein belongs to the pyruvate, phosphate/water dikinase regulatory protein family. PSRP subfamily.

It catalyses the reaction [pyruvate, water dikinase] + ADP = [pyruvate, water dikinase]-phosphate + AMP + H(+). The catalysed reaction is [pyruvate, water dikinase]-phosphate + phosphate + H(+) = [pyruvate, water dikinase] + diphosphate. Functionally, bifunctional serine/threonine kinase and phosphorylase involved in the regulation of the phosphoenolpyruvate synthase (PEPS) by catalyzing its phosphorylation/dephosphorylation. In Pseudomonas putida (strain ATCC 47054 / DSM 6125 / CFBP 8728 / NCIMB 11950 / KT2440), this protein is Putative phosphoenolpyruvate synthase regulatory protein.